The primary structure comprises 983 residues: Next to BRCA1 gene 1 protein (983 aa).

The PB1 domain occupies 4–86; the sequence is QVTLNVTFKN…NQLQMQVHEG (83 aa). Position 117 is a phosphoserine (serine 117). The segment at 126-149 is disordered; that stretch reads MKTTEEPTAEARSPVPCDTDKPQD. The segment at 214 to 266 adopts a ZZ-type zinc-finger fold; sequence SWHIACSHCQKRIVGVRYQCSLCPSYNICEDCEAGPYSHDTNHILLKFRRPVV. Zn(2+) contacts are provided by cysteine 219, cysteine 222, cysteine 233, cysteine 236, cysteine 242, cysteine 245, histidine 252, and histidine 256. ATG8 family proteins-binding stretches follow at residues 544–638 and 745–756; these read ASER…PASV and ASSEDYIIILPE. Residue threonine 588 is modified to Phosphothreonine. Serine 592 and serine 598 each carry phosphoserine. Residues 611–645 are disordered; it reads EESEGAGLKASPDSTVLTKRKAETPASVEETEEDL. Residues 768 to 813 are disordered; sequence MYSSALSQPGLERGAEGEPGIESGQEPAEARERLPERESQPKEQSI. The segment covering 795–808 has biased composition (basic and acidic residues); sequence AEARERLPERESQP. Position 855 is a phosphoserine (serine 855). Residues 867–894 form a disordered region; it reads DHVRGEPRGSTGLANSRQKSCDHSRHHN. In terms of domain architecture, UBA spans 930 to 974; it reads SEDQTAALMAHLFEMGFCDRQLNLRLLRKHNHNILQVVTELLQVN.

As to quaternary structure, homooligomer and heterooligomer. Interacts with TRIM55. Interacts with titin/TTN. Interacts with RNF29, USP8, MAP1LC3A, MAP1LC3B, MAP1LC3C, GABARAP, GABARAPL1 and GABARAPL2. Binds to ubiquitin and ubiquitinated proteins. Interacts with SQSTM1. Interacts with TAX1BP1. Interacts with IRF3; this interaction mediates autophagic degradation of IRF3. Interacts with IL12A and IL12B. Post-translationally, phosphorylated by GSK3A; this phosphorylation inhibits NBR1 involvement in the formation of ubiquitinated protein aggregates.

It localises to the cytoplasm. Its subcellular location is the cytoplasmic vesicle. The protein localises to the autophagosome. It is found in the lysosome. The protein resides in the myofibril. It localises to the sarcomere. Its subcellular location is the m line. Its function is as follows. Ubiquitin-binding autophagy adapter that participates in different processes including host defense or intracellular homeostasis. Possesses a double function during the selective autophagy by acting as a shuttle bringing ubiquitinated proteins to autophagosomes and also by participating in the formation of protein aggregates. Plays a role in the regulation of the innate immune response by modulating type I interferon production and targeting ubiquitinated IRF3 for autophagic degradation. In response to oxidative stress, promotes an increase in SQSTM1 levels, phosphorylation, and body formation by preventing its autophagic degradation. In turn, activates the KEAP1-NRF2/NFE2L2 antioxidant pathway. Also plays non-autophagy role by mediating the shuttle of IL-12 to late endosome for subsequent secretion. This chain is Next to BRCA1 gene 1 protein (Nbr1), found in Rattus norvegicus (Rat).